Consider the following 66-residue polypeptide: Large ribosomal subunit protein bL35 (66 aa).

The protein belongs to the bacterial ribosomal protein bL35 family.

This Methylobacterium nodulans (strain LMG 21967 / CNCM I-2342 / ORS 2060) protein is Large ribosomal subunit protein bL35.